The sequence spans 165 residues: Cysteine and tyrosine-rich protein 1 (165 aa).

The signal sequence occupies residues 1–29; that stretch reads MDALRLPRRPGVLLPKLILLFVYAGDCLA. Residues 30–61 are Extracellular-facing; the sequence is QCGKECHSYCCDGSTPYCCSYYAYIGNILSGT. Residues 62–82 traverse the membrane as a helical segment; it reads AIAGIVFGIVFIMGVIAGIAI. Residues 83-165 lie on the Cytoplasmic side of the membrane; it reads CICMCMKNNR…SSSQNRIRDN (83 aa). The interval 125–165 is disordered; sequence RTDLPPPYSAAPQASAQRSPPPPYPGNPRKYSSSQNRIRDN. The span at 154–165 shows a compositional bias: polar residues; sequence KYSSSQNRIRDN.

It belongs to the CYYR1 family.

It is found in the membrane. The sequence is that of Cysteine and tyrosine-rich protein 1 (Cyyr1) from Mus musculus (Mouse).